Consider the following 164-residue polypeptide: MEQSSLLLKKQLADMRRVPVDGFSAGLVDDNDIYKWEVLVIGPPDTLYEGGFFKAILDFPRDYPQKPPKMKFISEIWHPNIDKEGNVCISILHDPGDDKWGYERPEERWLPVHTVETILLSVISMLTDPNFESPANVDAAKMQRENYAEFKKKVAQCVRRSQEE.

One can recognise a UBC core domain in the interval 3–163 (QSSLLLKKQL…VAQCVRRSQE (161 aa)). Cys-88 serves as the catalytic Glycyl thioester intermediate.

The protein belongs to the ubiquitin-conjugating enzyme family.

The enzyme catalyses S-ubiquitinyl-[E1 ubiquitin-activating enzyme]-L-cysteine + [E2 ubiquitin-conjugating enzyme]-L-cysteine = [E1 ubiquitin-activating enzyme]-L-cysteine + S-ubiquitinyl-[E2 ubiquitin-conjugating enzyme]-L-cysteine.. Its pathway is protein modification; protein ubiquitination. Functionally, catalyzes the covalent attachment of ubiquitin to other proteins. This is Probable ubiquitin-conjugating enzyme E2 7 (ubc-7) from Caenorhabditis elegans.